Here is an 855-residue protein sequence, read N- to C-terminus: Endochitinase 2 (855 aa).

The N-terminal stretch at 1-22 (MGPTNILAAFIAVSSLFIQSLA) is a signal peptide. Positions 29-340 (SNLAVYWGQG…DIMKEVLLRC (312 aa)) constitute a GH18 domain. N-linked (GlcNAc...) asparagine glycosylation occurs at asparagine 90. Glutamate 175 serves as the catalytic Proton donor. Positions 341–672 (DPDPPTSTVT…APSSSTTEDR (332 aa)) are disordered. Residues 346-400 (TSTVTSTTSASTSTQTSSQSTTMETKTLSASTTPSSPSTVSPSSTMQTTSTGSTS) show a composition bias toward low complexity. Over residues 401 to 456 (IETVTTRSQEPPSTTISTRSASTEPVTTRSQEPPSTTISTRSASTETVTTRSQEPP) the composition is skewed to polar residues. Residues 457-483 (STTISTWSASTETSTSSQDSPSTTIST) are compositionally biased toward low complexity. The segment covering 484–521 (KSAPTGTVTTRSQDLPSTTISTRSPETETETATTKSQG) has biased composition (polar residues). Over residues 522–533 (SPSITLSTRSSS) the composition is skewed to low complexity. Residues 534 to 555 (AETVSTRSQHSSSTTISTKSAP) show a composition bias toward polar residues. Positions 556 to 567 (TETGTTSEHSTS) are enriched in low complexity. A compositionally biased stretch (polar residues) spans 568-641 (MPVSTRSAST…SQTPTTIITG (74 aa)). 2 stretches are compositionally biased toward low complexity: residues 642 to 652 (TPSDPVSAPTT) and 659 to 672 (TLTL…TEDR). Residue glycine 826 is the site of GPI-anchor amidated glycine attachment. A propeptide spans 827-855 (SAMTVRSMDVVAKALITAGAAVLGLFLGL) (removed in mature form).

It belongs to the glycosyl hydrolase 18 family. Chitinase class III subfamily.

The protein localises to the cell membrane. It carries out the reaction Random endo-hydrolysis of N-acetyl-beta-D-glucosaminide (1-&gt;4)-beta-linkages in chitin and chitodextrins.. Its function is as follows. May be associated with endosporulation. The chain is Endochitinase 2 (CTS2) from Coccidioides posadasii (strain C735) (Valley fever fungus).